We begin with the raw amino-acid sequence, 161 residues long: Phosphopantetheine adenylyltransferase (161 aa).

Residue S9 participates in substrate binding. ATP-binding positions include 9–10 (SF) and H17. Substrate contacts are provided by K41, T73, and R87. ATP-binding positions include 88 to 90 (GLR), E98, and 123 to 129 (FAHISST).

Belongs to the bacterial CoaD family. In terms of assembly, homohexamer. Mg(2+) serves as cofactor.

It is found in the cytoplasm. The catalysed reaction is (R)-4'-phosphopantetheine + ATP + H(+) = 3'-dephospho-CoA + diphosphate. It participates in cofactor biosynthesis; coenzyme A biosynthesis; CoA from (R)-pantothenate: step 4/5. Reversibly transfers an adenylyl group from ATP to 4'-phosphopantetheine, yielding dephospho-CoA (dPCoA) and pyrophosphate. The sequence is that of Phosphopantetheine adenylyltransferase from Chloroflexus aurantiacus (strain ATCC 29366 / DSM 635 / J-10-fl).